The following is a 261-amino-acid chain: Ethanolamine ammonia-lyase small subunit (261 aa).

The adenosylcob(III)alamin site is built by Val157, Glu178, and Cys207.

The protein belongs to the EutC family. The basic unit is a heterodimer which dimerizes to form tetramers. The heterotetramers trimerize; 6 large subunits form a core ring with 6 small subunits projecting outwards. It depends on adenosylcob(III)alamin as a cofactor.

The protein resides in the bacterial microcompartment. The catalysed reaction is ethanolamine = acetaldehyde + NH4(+). It functions in the pathway amine and polyamine degradation; ethanolamine degradation. In terms of biological role, catalyzes the deamination of various vicinal amino-alcohols to oxo compounds. Allows this organism to utilize ethanolamine as the sole source of nitrogen and carbon in the presence of external vitamin B12. The polypeptide is Ethanolamine ammonia-lyase small subunit (Rhodopseudomonas palustris (strain BisA53)).